A 266-amino-acid chain; its full sequence is Histidinol-phosphatase (266 aa).

Residues glutamate 69, aspartate 84, isoleucine 86, and aspartate 87 each coordinate Mg(2+). Glutamate 69 contributes to the substrate binding site. Substrate-binding positions include 86–89 (IDGT), arginine 190, and aspartate 218. Aspartate 218 contributes to the Mg(2+) binding site.

The protein belongs to the inositol monophosphatase superfamily. It depends on Mg(2+) as a cofactor.

It carries out the reaction L-histidinol phosphate + H2O = L-histidinol + phosphate. The protein operates within amino-acid biosynthesis; L-histidine biosynthesis; L-histidine from 5-phospho-alpha-D-ribose 1-diphosphate: step 8/9. In terms of biological role, catalyzes the dephosphorylation of histidinol-phosphate to histidinol, the direct precursor of histidine. The sequence is that of Histidinol-phosphatase from Streptomyces coelicolor (strain ATCC BAA-471 / A3(2) / M145).